A 153-amino-acid polypeptide reads, in one-letter code: ORM1-like protein 2 (153 aa).

The Cytoplasmic portion of the chain corresponds to 1 to 21 (MNVGVAHSEVNPNTRVMNSRG). 2 consecutive transmembrane segments (helical) span residues 22 to 42 (IWLA…SIPF) and 43 to 63 (FSIP…TYVF). The Cytoplasmic portion of the chain corresponds to 64–105 (LHTVKGTPFETPDQGKARLLTHWEQMDYGLQFTSSRKFLSIS). The chain crosses the membrane as a helical span at residues 106 to 126 (PIVLYLLASFYTKYDAAHFLI). Residues 127 to 153 (NTASLLSVLLPKLPQFHGVRVFGINKY) are Extracellular-facing.

The protein belongs to the ORM family. As to quaternary structure, ceramide-sensitive subunit of the serine palmitoyltransferase (SPT) complex, which is also composed of SPTLC1, SPTLC2/3 and SPTSSA/B. Widely expressed. Expressed in adult and fetal heart, brain, lung, liver, skeletal muscle and kidney. Expressed in adult pancreas and placenta and in fetal spleen abd thymus.

The protein resides in the endoplasmic reticulum membrane. Its function is as follows. Plays an essential role in the homeostatic regulation of sphingolipid de novo biosynthesis by modulating the activity of the serine palmitoyltransferase (SPT) in response to ceramide levels. When complexed to SPT, the binding of ceramides to its N-terminus stabilizes a conformation that block SPT substrate entry, hence preventing SPT catalytic activity. Through this mechanism, maintains ceramide levels at sufficient concentrations for the production of complex sphingolipids, but which prevents the accumulation of ceramides to levels that trigger apoptosis. The chain is ORM1-like protein 2 (ORMDL2) from Homo sapiens (Human).